A 329-amino-acid polypeptide reads, in one-letter code: POU domain, class 5, transcription factor 2 (329 aa).

Over residues 1 to 14 (MAGRRSSNVFPLSG) the composition is skewed to polar residues. The segment at 1–24 (MAGRRSSNVFPLSGNSGGGLEVDT) is disordered. The region spanning 107–181 (DVSAIQKEME…LLKMWLEEVD (75 aa)) is the POU-specific domain. A DNA-binding region (homeobox) is located at residues 199–258 (RKRRRASRERRIGSNLEKLFLQCPEPTPQQISYIAGRLRLQKDLVQVWFSNRSQMGSWPT).

This sequence belongs to the POU transcription factor family. Class-5 subfamily. In adult brain, expressed in the olfactory bulb, becoming specifically concentrated in the mitral cell layer. Also found in the pyramidal cell layer of the hippocampus, in the granule cell layer of the cerebellum and in the cortex.

The protein localises to the nucleus. Transcription factor that binds preferentially to the octamer motif (5'-ATGTTAAT-3'). May exert a regulatory function in meiotic events that are required for terminal differentiation of male germ cell. The protein is POU domain, class 5, transcription factor 2 (Pou5f2) of Mus musculus (Mouse).